The following is a 212-amino-acid chain: Peptide methionine sulfoxide reductase MsrA (212 aa).

Residue Cys-52 is part of the active site.

This sequence belongs to the MsrA Met sulfoxide reductase family.

The enzyme catalyses L-methionyl-[protein] + [thioredoxin]-disulfide + H2O = L-methionyl-(S)-S-oxide-[protein] + [thioredoxin]-dithiol. It catalyses the reaction [thioredoxin]-disulfide + L-methionine + H2O = L-methionine (S)-S-oxide + [thioredoxin]-dithiol. Functionally, has an important function as a repair enzyme for proteins that have been inactivated by oxidation. Catalyzes the reversible oxidation-reduction of methionine sulfoxide in proteins to methionine. In Salmonella agona (strain SL483), this protein is Peptide methionine sulfoxide reductase MsrA.